A 306-amino-acid polypeptide reads, in one-letter code: Ornithine carbamoyltransferase (306 aa).

Residues 46–49 (STRT), Gln73, Arg97, and 124–127 (HPTQ) contribute to the carbamoyl phosphate site. L-ornithine contacts are provided by residues Asn156, Asp220, and 224–225 (SM). Residues 260–261 (CL) and Arg288 each bind carbamoyl phosphate.

The protein belongs to the aspartate/ornithine carbamoyltransferase superfamily. OTCase family.

It is found in the cytoplasm. It catalyses the reaction carbamoyl phosphate + L-ornithine = L-citrulline + phosphate + H(+). It participates in amino-acid degradation; L-arginine degradation via ADI pathway; carbamoyl phosphate from L-arginine: step 2/2. Reversibly catalyzes the transfer of the carbamoyl group from carbamoyl phosphate (CP) to the N(epsilon) atom of ornithine (ORN) to produce L-citrulline. The chain is Ornithine carbamoyltransferase from Campylobacter jejuni subsp. doylei (strain ATCC BAA-1458 / RM4099 / 269.97).